Consider the following 193-residue polypeptide: AP-3 complex subunit sigma-2 (193 aa).

This sequence belongs to the adaptor complexes small subunit family. As to quaternary structure, adaptor protein complex 3 (AP-3) is a heterotetramer composed of two large adaptins (delta-type subunit AP3D1 and beta-type subunit AP3B1 or AP3B2), a medium adaptin (mu-type subunit AP3M1 or AP3M2) and a small adaptin (sigma-type subunit APS1 or AP3S2). Interacts with AGAP1. AP-3 associates with the BLOC-1 complex. In terms of tissue distribution, present in all adult tissues examined.

The protein localises to the golgi apparatus. The protein resides in the cytoplasmic vesicle membrane. Functionally, part of the AP-3 complex, an adaptor-related complex which is not clathrin-associated. The complex is associated with the Golgi region as well as more peripheral structures. It facilitates the budding of vesicles from the Golgi membrane and may be directly involved in trafficking to lysosomes. In concert with the BLOC-1 complex, AP-3 is required to target cargos into vesicles assembled at cell bodies for delivery into neurites and nerve terminals. In Homo sapiens (Human), this protein is AP-3 complex subunit sigma-2 (AP3S2).